Here is a 562-residue protein sequence, read N- to C-terminus: MLLFLSVPQPRPPGARTRAGAARLVRWRRRQRLRLLQLRRLRGLLRGLRRRPGTGGRRPSRMALCGQAAGAASLPSELIVHIFSFLPAPDRLRASASCSHWRECLFYPALWPQLRICLRVSPAEQPRLEFLMRKCGWFVRELRVEFAAENYLSGGGGPGDGGSGGGTDTGTGGEDGEALQLSSRWLEVLRIYLELVLCVLLSIRNNRNLQKFSLFGDISVVHQQGSLSSTYLSRVDPDGKKIKQIQQLFEEILSNSRQLKWLSCGFMLEIVTPTSLSSLSNPIANTMEHLSLLDNNIPGNSTLITAVELERFVNLRSLALDFCDFTAEMARVLTDSNHVPLQRLSLLVHNASVMLKSLDNMPNDEHWKALSRKSSSLRVYLMVFDIKSEDMLKILKPSIPLERVHFDSYVTCVSGAIVDLISRQYDKFLTHFILMNDMIDTSGFPDLSDNRNEDPLVLLAWRCTKLTLLAIHGYTVWAHNLIAIARLRGSDLKVLQVTEESIDFDQGELADQDVDPVQNLIEQVSLGLGQSWHAVLDIESLSVFTEPNRHFYREMQSFSEDI.

An F-box domain is found at 68–114 (AAGAASLPSELIVHIFSFLPAPDRLRASASCSHWRECLFYPALWPQL). A compositionally biased stretch (gly residues) spans 155 to 173 (GGGPGDGGSGGGTDTGTGG). A disordered region spans residues 155–176 (GGGPGDGGSGGGTDTGTGGEDG).

As to quaternary structure, part of the SCF (SKP1-CUL1-F-box) E3 ubiquitin-protein ligase complex SCF(FBXO33) formed of CUL1, SKP1, RBX1 and FBXO33. Interacts via its N-terminus with YBX1 CSD domain. Directly interacts with SKP1 and CUL1.

It functions in the pathway protein modification; protein ubiquitination. In terms of biological role, substrate recognition component of a SCF (SKP1-CUL1-F-box protein) E3 ubiquitin-protein ligase complex which mediates the ubiquitination and subsequent proteasomal degradation of target proteins. Probably recognizes and binds to phosphorylated target proteins. Recognizes YBX1. The chain is F-box only protein 33 (Fbxo33) from Mus musculus (Mouse).